The primary structure comprises 366 residues: Ribosomal RNA large subunit methyltransferase M (366 aa).

S-adenosyl-L-methionine-binding positions include Ser188, 221–224 (CPGG), Asp240, Asp260, and Asp277. The active-site Proton acceptor is the Lys306.

It belongs to the class I-like SAM-binding methyltransferase superfamily. RNA methyltransferase RlmE family. RlmM subfamily. Monomer.

Its subcellular location is the cytoplasm. The enzyme catalyses cytidine(2498) in 23S rRNA + S-adenosyl-L-methionine = 2'-O-methylcytidine(2498) in 23S rRNA + S-adenosyl-L-homocysteine + H(+). In terms of biological role, catalyzes the 2'-O-methylation at nucleotide C2498 in 23S rRNA. This is Ribosomal RNA large subunit methyltransferase M from Klebsiella pneumoniae (strain 342).